The sequence spans 293 residues: MSSYTMQLRTYIEMWSQGETGLSTAEKIEKGRPKLFDFNYPIFDESYRTIFETHFIRNFYMREIGFETEGLFKFHLETWLMINMPYFNKLFESELIKYDPLENTRVGVKSNTKNDTDRNDNRDVKQDLTSNGTSSTDAKQNDTSKTTGNEKSSGSGSITDDNFKRDLNADTADDRLQLTTKDGEGVLEYASQIEEHNENKKRDTKTSNTTDTTSNTTGTSTLDSDSKTSNKANTTSNDKLNSQINSVEDYIEDRVGKIGTQSYARLVMDYREALLRIEQRIFNEMQELFMLVY.

Disordered regions lie at residues 106-166 (VGVK…FKRD) and 192-240 (QIEE…NDKL). Over residues 112-126 (TKNDTDRNDNRDVKQ) the composition is skewed to basic and acidic residues. Residues 127–160 (DLTSNGTSSTDAKQNDTSKTTGNEKSSGSGSITD) show a composition bias toward polar residues. Basic and acidic residues predominate over residues 193-205 (IEEHNENKKRDTK). Positions 206–231 (TSNTTDTTSNTTGTSTLDSDSKTSNK) are enriched in low complexity.

The protein belongs to the phi29likevirus proximal tail tube connector protein family.

It localises to the virion. Functionally, forms the proximal part of the tail tube. This is Proximal tail tube connector protein (11) from Bacillus phage PZA (Bacteriophage PZA).